Consider the following 173-residue polypeptide: Histone deacetylase complex subunit SAP30 homolog (173 aa).

Residues 21–69 (CCLLDDGDRCRNQAGNASYSKRIQKTVTQRRLKLSIDTAARHIYICDFH) form an Atypical zinc finger.

This sequence belongs to the SAP30 family. As to quaternary structure, component of the class 1 Sin3-histone deacetylase complex (HDAC).

The protein localises to the nucleus. Functionally, required for the function of the class 1 Sin3-histone deacetylase complex (HDAC). The protein is Histone deacetylase complex subunit SAP30 homolog of Aedes aegypti (Yellowfever mosquito).